We begin with the raw amino-acid sequence, 506 residues long: Deoxyribodipyrimidine photo-lyase (506 aa).

The span at 1–21 shows a compositional bias: pro residues; the sequence is MPPTSVSPPRTAPGPANPSPA. The interval 1–33 is disordered; that stretch reads MPPTSVSPPRTAPGPANPSPAHPSRVRVIHPGG. Residues 38 to 171 form the Photolyase/cryptochrome alpha/beta domain; sequence GPVVYWMLRD…AVHQVDAHNV (134 aa). Residues tyrosine 268 and 282–285 each bind FAD; that span reads SGLS. Serine 312 is subject to Phosphoserine. Residues 319–327, lysine 390, asparagine 421, aspartate 427, and 427–429 contribute to the FAD site; these read ELVVRRELA and DGR. Residues 487–506 are disordered; sequence KKRNAEESPNPVVKLSKSQH.

Belongs to the DNA photolyase class-2 family. Requires FAD as cofactor. As to expression, expressed in proliferating tissues. Highly expressed in roots and shoot apical meristem (SAM). Expressed in leaves, flag leaves, and panicle.

The protein localises to the nucleus. It catalyses the reaction cyclobutadipyrimidine (in DNA) = 2 pyrimidine residues (in DNA).. In terms of biological role, involved in repair of UV radiation-induced DNA damage. Catalyzes the light-dependent monomerization (300-600 nm) of cyclobutylpyrimidine dimers (CPDs), which are formed between adjacent bases on the same DNA strand upon exposure to ultraviolet radiation. Required for plant survival in the presence of UV-B light. Not involved in the repair of (6-4) photoproducts. The polypeptide is Deoxyribodipyrimidine photo-lyase (PHR) (Oryza sativa subsp. japonica (Rice)).